The following is a 419-amino-acid chain: MINRFSIEKVKGLEIIDSRGNPTIRVFVRTNDGVESFGDAPAGASKGTREAIEVRDENGLTVKRAVDIANYIIDPALHGIDVREQGIIDKILIDIDSTENKSKLGGNTIIATSIAALKTASKALGLEVFKYIAGPRLPKIPIPLLNIINGGLHAGNKLKIQEFIILPIKFNTFKEAFFAAIEVYRNLKGLISERYGKIYTAVGDEGGFSPPLEETREALDLIYTSINNAGYQGKIYMGMDAAASDFYDPKKEKYIIDGKELNPTQLLEFYLDLAKEYPIVYLEDPFEENSFDMFGELQNKLNSTIVTGDDLYTTNIKYLKIGIEKRSTKGVIVKPNQVGTISETFEFTNLARRNSIKLVTSHRSGETEDNFIAEFAVGIESDFIKTGAPARGERTSKYNKLLEIENKFGLEYGGKYFYL.

Residue glutamine 161 coordinates (2R)-2-phosphoglycerate. The Proton donor role is filled by glutamate 205. Positions 240, 283, and 309 each coordinate Mg(2+). Residues lysine 334, arginine 363, serine 364, and lysine 385 each contribute to the (2R)-2-phosphoglycerate site. Catalysis depends on lysine 334, which acts as the Proton acceptor.

This sequence belongs to the enolase family. Mg(2+) serves as cofactor.

The protein resides in the cytoplasm. The protein localises to the secreted. It is found in the cell surface. It carries out the reaction (2R)-2-phosphoglycerate = phosphoenolpyruvate + H2O. It participates in carbohydrate degradation; glycolysis; pyruvate from D-glyceraldehyde 3-phosphate: step 4/5. Its function is as follows. Catalyzes the reversible conversion of 2-phosphoglycerate (2-PG) into phosphoenolpyruvate (PEP). It is essential for the degradation of carbohydrates via glycolysis. The chain is Enolase from Saccharolobus islandicus (strain L.S.2.15 / Lassen #1) (Sulfolobus islandicus).